We begin with the raw amino-acid sequence, 579 residues long: ATP-dependent RNA helicase SUV3, mitochondrial (579 aa).

The N-terminal 59 residues, 1-59 (MAVAAALLRRRALYSALASPSWLHDTSSCYICSISGTHSLVNHPNLRLQRGYHNSGKFD), are a transit peptide targeting the mitochondrion. In terms of domain architecture, Helicase ATP-binding spans 72 to 213 (NAREKKRNVF…QRILEPTGDV (142 aa)). 85-92 (GPTNSGKT) is a binding site for ATP. Residues 214–388 (VTVQYYERLS…GLFPTFDVLS (175 aa)) form the Helicase C-terminal domain. An N-linked (GlcNAc...) asparagine glycan is attached at N309.

The protein belongs to the helicase family. In terms of assembly, homodimer; in free form. Component of the mitochondrial degradosome (mtEXO) complex which is a heteropentamer containing 2 copies of SUPV3L1 and 3 copies of PNPT1. Mg(2+) serves as cofactor. It depends on Mn(2+) as a cofactor.

Its subcellular location is the nucleus. The protein resides in the mitochondrion matrix. The protein localises to the mitochondrion nucleoid. It catalyses the reaction ATP + H2O = ADP + phosphate + H(+). In terms of biological role, major helicase player in mitochondrial RNA metabolism. Component of the mitochondrial degradosome (mtEXO) complex, that degrades 3' overhang double-stranded RNA with a 3'-to-5' directionality in an ATP-dependent manner. ATPase and ATP-dependent multisubstrate helicase, able to unwind double-stranded (ds) DNA and RNA, and RNA/DNA heteroduplexes in the 5'-to-3' direction. Plays a role in the RNA surveillance system in mitochondria; regulates the stability of mature mRNAs, the removal of aberrantly formed mRNAs and the rapid degradation of non coding processing intermediates. Confers salinity and drought stress tolerances by maintaining both photosynthesis and antioxidant machinery, probably via an increase in plant hormones levels such as gibberellic acid (GA(3)), the cytokinin zeatin (Z) and indole-3-acetic acid (IAA). This is ATP-dependent RNA helicase SUV3, mitochondrial from Oryza sativa subsp. japonica (Rice).